The sequence spans 909 residues: Protein virilizer (909 aa).

Over residues 746–784 the composition is skewed to polar residues; that stretch reads STSKNTNTNVSKQQQQPQNSTPCSSNRFLFNKSSLISQE. Residues 746–824 form a disordered region; that stretch reads STSKNTNTNV…TNMTRQPTTL (79 aa). The span at 785–799 shows a compositional bias: low complexity; sequence SNGSNNNSGTQGPGS. Over residues 800 to 810 the composition is skewed to polar residues; it reads MNESYSLDNSF. Positions 811-824 are enriched in low complexity; that stretch reads NTTNTNMTRQPTTL. Ser-856 and Ser-898 each carry phosphoserine.

The protein belongs to the vir family. In terms of assembly, component of the MIS (mRNA N6-methyladenosine (m6A) methylation) complex, at least composed of IME4, KAR4, MUM2, SLZ1, and VIR1. Interacts with KAR4. Interacts with SLZ1. Interacts with MUM2. Interacts with IME4.

Its subcellular location is the cytoplasm. The protein localises to the nucleus. The protein resides in the nucleolus. In terms of biological role, component of the MIS complex, a complex that mediates N6-methyladenosine (m6A) methylation of meiotic mRNAs and is required for initiation of meiosis, progression through the meiotic divisions and sporulation. In the complex, performs a scaffolding role stabilizing the other complex members. The sequence is that of Protein virilizer from Saccharomyces cerevisiae (strain ATCC 204508 / S288c) (Baker's yeast).